The primary structure comprises 586 residues: Kelch-like protein 7 (586 aa).

The BTB domain maps to 44–111 (CDVILMVQER…AYTARISVNS (68 aa)). In terms of domain architecture, BACK spans 146-248 (CLGISVLAEC…SKNFLSKTVQ (103 aa)). 6 Kelch repeats span residues 294–336 (RIAL…FWDN), 337–382 (VVYI…AAEG), 383–430 (KIYT…EANG), 431–481 (LIYV…FVKD), 483–528 (IFAV…AVGS), and 530–575 (VYVL…CVVD).

As to quaternary structure, homodimer. Component of the BCR(KLHL7) E3 ubiquitin ligase complex.

It localises to the nucleus. Its subcellular location is the cytoplasm. It participates in protein modification; protein ubiquitination. In terms of biological role, substrate-specific adapter of a BCR (BTB-CUL3-RBX1) E3 ubiquitin ligase complex. The BCR(KLHL7) complex acts by mediating ubiquitination and subsequent degradation of substrate proteins. Probably mediates 'Lys-48'-linked ubiquitination. The polypeptide is Kelch-like protein 7 (KLHL7) (Gallus gallus (Chicken)).